The primary structure comprises 359 residues: Protein Wnt-5a (359 aa).

The signal sequence occupies residues 1-20; sequence MATTHLTAALALLCALLQVD. Cysteine 83 and cysteine 94 form a disulfide bridge. Residues asparagine 93 and asparagine 99 are each glycosylated (N-linked (GlcNAc...) asparagine). 10 disulfides stabilise this stretch: cysteine 133-cysteine 141, cysteine 143-cysteine 161, cysteine 217-cysteine 231, cysteine 219-cysteine 226, cysteine 288-cysteine 319, cysteine 304-cysteine 314, cysteine 318-cysteine 358, cysteine 334-cysteine 349, cysteine 336-cysteine 346, and cysteine 341-cysteine 342. A lipid anchor (O-palmitoleoyl serine; by PORCN) is attached at serine 223. N-linked (GlcNAc...) asparagine glycosylation is found at asparagine 291 and asparagine 305.

This sequence belongs to the Wnt family. In terms of processing, palmitoleoylation is required for efficient binding to frizzled receptors. Depalmitoleoylation leads to Wnt signaling pathway inhibition. Neuroectodermal and non-neuroectodermal tissues.

The protein resides in the secreted. It localises to the extracellular space. The protein localises to the extracellular matrix. Its function is as follows. Ligand for members of the frizzled family of seven transmembrane receptors. Can activate or inhibit canonical Wnt signaling, depending on receptor context. Required during embryogenesis for extension of the primary anterior-posterior axis. This Ambystoma mexicanum (Axolotl) protein is Protein Wnt-5a (WNT-5A).